The sequence spans 280 residues: Hydroxyethylthiazole kinase (280 aa).

Met50 is a substrate binding site. Residues Lys125 and Thr178 each coordinate ATP. Substrate is bound at residue Gly205.

The protein belongs to the Thz kinase family. Mg(2+) is required as a cofactor.

The catalysed reaction is 5-(2-hydroxyethyl)-4-methylthiazole + ATP = 4-methyl-5-(2-phosphooxyethyl)-thiazole + ADP + H(+). The protein operates within cofactor biosynthesis; thiamine diphosphate biosynthesis; 4-methyl-5-(2-phosphoethyl)-thiazole from 5-(2-hydroxyethyl)-4-methylthiazole: step 1/1. Its function is as follows. Catalyzes the phosphorylation of the hydroxyl group of 4-methyl-5-beta-hydroxyethylthiazole (THZ). The sequence is that of Hydroxyethylthiazole kinase from Lacticaseibacillus casei (strain BL23) (Lactobacillus casei).